A 508-amino-acid polypeptide reads, in one-letter code: Photosystem II CP47 reaction center protein (508 aa).

Helical transmembrane passes span 21–36 (SVHI…WAGS), 101–115 (IILA…MWHW), 140–156 (GIHL…FGAF), 203–218 (IAAG…FHLS), 237–252 (VLSS…AFVV), and 457–472 (CFAL…HGAR).

The protein belongs to the PsbB/PsbC family. PsbB subfamily. PSII is composed of 1 copy each of membrane proteins PsbA, PsbB, PsbC, PsbD, PsbE, PsbF, PsbH, PsbI, PsbJ, PsbK, PsbL, PsbM, PsbT, PsbX, PsbY, PsbZ, Psb30/Ycf12, at least 3 peripheral proteins of the oxygen-evolving complex and a large number of cofactors. It forms dimeric complexes. It depends on Binds multiple chlorophylls. PSII binds additional chlorophylls, carotenoids and specific lipids. as a cofactor.

The protein localises to the plastid. It is found in the chloroplast thylakoid membrane. Functionally, one of the components of the core complex of photosystem II (PSII). It binds chlorophyll and helps catalyze the primary light-induced photochemical processes of PSII. PSII is a light-driven water:plastoquinone oxidoreductase, using light energy to abstract electrons from H(2)O, generating O(2) and a proton gradient subsequently used for ATP formation. The sequence is that of Photosystem II CP47 reaction center protein from Mesostigma viride (Green alga).